The primary structure comprises 572 residues: Proline--tRNA ligase (572 aa).

This sequence belongs to the class-II aminoacyl-tRNA synthetase family. ProS type 1 subfamily. Homodimer.

The protein localises to the cytoplasm. The catalysed reaction is tRNA(Pro) + L-proline + ATP = L-prolyl-tRNA(Pro) + AMP + diphosphate. Functionally, catalyzes the attachment of proline to tRNA(Pro) in a two-step reaction: proline is first activated by ATP to form Pro-AMP and then transferred to the acceptor end of tRNA(Pro). As ProRS can inadvertently accommodate and process non-cognate amino acids such as alanine and cysteine, to avoid such errors it has two additional distinct editing activities against alanine. One activity is designated as 'pretransfer' editing and involves the tRNA(Pro)-independent hydrolysis of activated Ala-AMP. The other activity is designated 'posttransfer' editing and involves deacylation of mischarged Ala-tRNA(Pro). The misacylated Cys-tRNA(Pro) is not edited by ProRS. The protein is Proline--tRNA ligase of Citrobacter koseri (strain ATCC BAA-895 / CDC 4225-83 / SGSC4696).